The chain runs to 213 residues: Urease accessory protein UreE (213 aa).

The disordered stretch occupies residues 170-213 (EHHGRSHSHSHSHSHDHDHDHDHDHDHDHQHGPSCSHGHGHGHR). Residues 182–200 (HSHDHDHDHDHDHDHDHQH) are compositionally biased toward basic and acidic residues.

This sequence belongs to the UreE family.

It is found in the cytoplasm. Involved in urease metallocenter assembly. Binds nickel. Probably functions as a nickel donor during metallocenter assembly. The polypeptide is Urease accessory protein UreE (Burkholderia thailandensis (strain ATCC 700388 / DSM 13276 / CCUG 48851 / CIP 106301 / E264)).